Here is a 688-residue protein sequence, read N- to C-terminus: Polyribonucleotide nucleotidyltransferase (688 aa).

Positions 484 and 490 each coordinate Mg(2+). The region spanning 550–609 (PQTEIFNVAPDKIIEIIGQGGRVIKEIVEKFEVKIDLNTPSGEVKIMGNKERVLKTKEFI) is the KH domain. The 63-residue stretch at 626 to 688 (DEVLEAQVKR…NKGKIALDLA (63 aa)) folds into the S1 motif domain.

Belongs to the polyribonucleotide nucleotidyltransferase family. It depends on Mg(2+) as a cofactor.

The protein resides in the cytoplasm. It catalyses the reaction RNA(n+1) + phosphate = RNA(n) + a ribonucleoside 5'-diphosphate. Involved in mRNA degradation. Catalyzes the phosphorolysis of single-stranded polyribonucleotides processively in the 3'- to 5'-direction. In Helicobacter pylori (strain J99 / ATCC 700824) (Campylobacter pylori J99), this protein is Polyribonucleotide nucleotidyltransferase.